A 270-amino-acid chain; its full sequence is Dehydrodolichyl diphosphate synthase (270 aa).

It belongs to the UPP synthase family.

It is found in the endoplasmic reticulum membrane. Its pathway is protein modification; protein glycosylation. Its function is as follows. Cis-prenyl transferase that adds multiple copies of isopentenyl pyrophosphate (IPP) to farnesyl pyrophosphate (FPP) to produce dehydrodolichyl diphosphate (Dedol-PP). This chain is Dehydrodolichyl diphosphate synthase (RER2), found in Encephalitozoon cuniculi (strain GB-M1) (Microsporidian parasite).